We begin with the raw amino-acid sequence, 469 residues long: Glutamate--tRNA ligase (469 aa).

A 'HIGH' region motif is present at residues 11–21 (PSPTGFIHLGN). Positions 243-247 (KMSKR) match the 'KMSKS' region motif. K246 is a binding site for ATP.

It belongs to the class-I aminoacyl-tRNA synthetase family. Glutamate--tRNA ligase type 1 subfamily. In terms of assembly, monomer.

It localises to the cytoplasm. It carries out the reaction tRNA(Glu) + L-glutamate + ATP = L-glutamyl-tRNA(Glu) + AMP + diphosphate. In terms of biological role, catalyzes the attachment of glutamate to tRNA(Glu) in a two-step reaction: glutamate is first activated by ATP to form Glu-AMP and then transferred to the acceptor end of tRNA(Glu). This chain is Glutamate--tRNA ligase, found in Burkholderia ambifaria (strain MC40-6).